Here is a 216-residue protein sequence, read N- to C-terminus: GTP cyclohydrolase 1 (216 aa).

Positions 108, 111, and 179 each coordinate Zn(2+).

It belongs to the GTP cyclohydrolase I family. As to quaternary structure, toroid-shaped homodecamer, composed of two pentamers of five dimers.

The enzyme catalyses GTP + H2O = 7,8-dihydroneopterin 3'-triphosphate + formate + H(+). Its pathway is cofactor biosynthesis; 7,8-dihydroneopterin triphosphate biosynthesis; 7,8-dihydroneopterin triphosphate from GTP: step 1/1. This chain is GTP cyclohydrolase 1, found in Shewanella oneidensis (strain ATCC 700550 / JCM 31522 / CIP 106686 / LMG 19005 / NCIMB 14063 / MR-1).